Here is a 146-residue protein sequence, read N- to C-terminus: D-aminoacyl-tRNA deacylase (146 aa).

The Gly-cisPro motif, important for rejection of L-amino acids signature appears at 137–138 (GP).

It belongs to the DTD family. As to quaternary structure, homodimer.

The protein resides in the cytoplasm. It catalyses the reaction glycyl-tRNA(Ala) + H2O = tRNA(Ala) + glycine + H(+). The enzyme catalyses a D-aminoacyl-tRNA + H2O = a tRNA + a D-alpha-amino acid + H(+). In terms of biological role, an aminoacyl-tRNA editing enzyme that deacylates mischarged D-aminoacyl-tRNAs. Also deacylates mischarged glycyl-tRNA(Ala), protecting cells against glycine mischarging by AlaRS. Acts via tRNA-based rather than protein-based catalysis; rejects L-amino acids rather than detecting D-amino acids in the active site. By recycling D-aminoacyl-tRNA to D-amino acids and free tRNA molecules, this enzyme counteracts the toxicity associated with the formation of D-aminoacyl-tRNA entities in vivo and helps enforce protein L-homochirality. This is D-aminoacyl-tRNA deacylase from Bacillus cereus (strain Q1).